The sequence spans 287 residues: ATP synthase gamma chain (287 aa).

It belongs to the ATPase gamma chain family. F-type ATPases have 2 components, CF(1) - the catalytic core - and CF(0) - the membrane proton channel. CF(1) has five subunits: alpha(3), beta(3), gamma(1), delta(1), epsilon(1). CF(0) has three main subunits: a, b and c.

The protein localises to the cell inner membrane. In terms of biological role, produces ATP from ADP in the presence of a proton gradient across the membrane. The gamma chain is believed to be important in regulating ATPase activity and the flow of protons through the CF(0) complex. This chain is ATP synthase gamma chain, found in Pectobacterium carotovorum subsp. carotovorum (strain PC1).